The chain runs to 204 residues: Recombination protein RecR (204 aa).

Residues 63–78 form a C4-type zinc finger; sequence CRICCNVADSELCPIC. A Toprim domain is found at 86–181; the sequence is NKICVVEQPQ…KVTRLARGLP (96 aa).

This sequence belongs to the RecR family.

May play a role in DNA repair. It seems to be involved in an RecBC-independent recombinational process of DNA repair. It may act with RecF and RecO. This chain is Recombination protein RecR, found in Dehalococcoides mccartyi (strain ATCC BAA-2100 / JCM 16839 / KCTC 5957 / BAV1).